Here is a 174-residue protein sequence, read N- to C-terminus: Bacterial proteasome activator (174 aa).

The interval 153–174 (QGALPPGVGKSGQHGHGTGQYL) is disordered. A compositionally biased stretch (gly residues) spans 161 to 174 (GKSGQHGHGTGQYL). The HbYX motif motif lies at 172–174 (QYL).

Belongs to the Bpa family. Forms a homooligomeric, either hexameric or heptameric, ring-like structure which stacks co-axially with the proteasomal alpha-rings.

Interacts with the core proteasome alpha-subunit (PrcA) through its C-terminal hydrophobic-tyrosine-X motif (HbYX motif). Interaction of Bpa with the proteasome stimulates proteasomal peptidase and casein degradation activity, which suggests Bpa could play a role in the removal of non-native or damaged proteins by influencing the conformation of the proteasome complex upon interaction. The sequence is that of Bacterial proteasome activator (bpa) from Mycobacterium bovis (strain ATCC BAA-935 / AF2122/97).